Reading from the N-terminus, the 439-residue chain is ATP-dependent protease ATPase subunit HslU (439 aa).

ATP-binding positions include I17, 59-64, D251, E317, and R389; that span reads GVGKTE.

It belongs to the ClpX chaperone family. HslU subfamily. In terms of assembly, a double ring-shaped homohexamer of HslV is capped on each side by a ring-shaped HslU homohexamer. The assembly of the HslU/HslV complex is dependent on binding of ATP.

It is found in the cytoplasm. In terms of biological role, ATPase subunit of a proteasome-like degradation complex; this subunit has chaperone activity. The binding of ATP and its subsequent hydrolysis by HslU are essential for unfolding of protein substrates subsequently hydrolyzed by HslV. HslU recognizes the N-terminal part of its protein substrates and unfolds these before they are guided to HslV for hydrolysis. The polypeptide is ATP-dependent protease ATPase subunit HslU (Campylobacter jejuni subsp. doylei (strain ATCC BAA-1458 / RM4099 / 269.97)).